The chain runs to 451 residues: Phosphoglucosamine mutase (451 aa).

Residue S101 is the Phosphoserine intermediate of the active site. The Mg(2+) site is built by S101, D241, D243, and D245. S101 carries the phosphoserine modification.

It belongs to the phosphohexose mutase family. Requires Mg(2+) as cofactor. In terms of processing, activated by phosphorylation.

The catalysed reaction is alpha-D-glucosamine 1-phosphate = D-glucosamine 6-phosphate. Its function is as follows. Catalyzes the conversion of glucosamine-6-phosphate to glucosamine-1-phosphate. The sequence is that of Phosphoglucosamine mutase from Exiguobacterium sibiricum (strain DSM 17290 / CCUG 55495 / CIP 109462 / JCM 13490 / 255-15).